Consider the following 457-residue polypeptide: Pancreatic triacylglycerol lipase (457 aa).

The first 7 residues, Leu-1–Ala-7, serve as a signal peptide directing secretion. Cystine bridges form between Cys-12-Cys-18 and Cys-99-Cys-110. Ser-161 functions as the Nucleophile in the catalytic mechanism. Residue Asp-185 is the Charge relay system of the active site. Ca(2+) contacts are provided by Glu-196, Arg-199, Asp-201, and Asp-204. Cys-246 and Cys-270 are oxidised to a cystine. His-272 serves as the catalytic Charge relay system. 2 disulfide bridges follow: Cys-294–Cys-305 and Cys-308–Cys-313. N-linked (GlcNAc...) asparagine glycosylation occurs at Asn-343. The region spanning Trp-347 to Cys-457 is the PLAT domain. Cys-441 and Cys-457 form a disulfide bridge.

This sequence belongs to the AB hydrolase superfamily. Lipase family. Forms a 1:1 stoichiometric complex with (pro)colipase/CLPS.

Its subcellular location is the secreted. The catalysed reaction is a triacylglycerol + H2O = a diacylglycerol + a fatty acid + H(+). It carries out the reaction 1,2,3-tributanoylglycerol + H2O = dibutanoylglycerol + butanoate + H(+). It catalyses the reaction 1,2,3-tri-(9Z-octadecenoyl)-glycerol + H2O = di-(9Z)-octadecenoylglycerol + (9Z)-octadecenoate + H(+). The enzyme catalyses all-trans-retinyl hexadecanoate + H2O = all-trans-retinol + hexadecanoate + H(+). The catalysed reaction is 1,2-di-(9Z-octadecenoyl)-glycerol + H2O = (9Z-octadecenoyl)-glycerol + (9Z)-octadecenoate + H(+). With respect to regulation, inhibited by bile salts, is reactivated by (pro)colipase/CLPS. Its function is as follows. Plays an important role in fat metabolism. It preferentially splits the esters of long-chain fatty acids at positions 1 and 3, producing mainly 2-monoacylglycerol and free fatty acids, and shows considerably higher activity against insoluble emulsified substrates than against soluble ones. This is Pancreatic triacylglycerol lipase (PNLIP) from Myocastor coypus (Coypu).